A 232-amino-acid chain; its full sequence is DOA4-independent degradation protein 4 (232 aa).

The stretch at 14-97 forms a coiled coil; that stretch reads PQERLKKNQR…AISLRIQAVR (84 aa). The segment at 183–232 is interaction with VPS4; that stretch reads LQSTPQNLVSNAPIAETAMGIPEPIGAGSEFHGNPDDDLQARLNTLKKQT. Positions 203–232 are disordered; the sequence is IPEPIGAGSEFHGNPDDDLQARLNTLKKQT. The short motif at 219–229 is the MIT-interacting motif element; that stretch reads DDLQARLNTLK.

It belongs to the SNF7 family. Core component of the ESCRT-III complex (endosomal sorting required for transport complex III). ESCRT-III appears to be sequentially assembled as a flat lattice on the endosome membrane and forms a transient 450 kDa complex that contains DID4, oligomerized SNF7, VPS20 and VPS24. SNF7 oligomerization into a membrane-associated filament is nucleated by association of SNF7 with VPS20; the process is terminated through association of VPS24, possibly by capping the SNF7 filament. VPS24 subsequently associates with DID4/VPS2.

It localises to the cytoplasm. Its subcellular location is the endosome membrane. Its function is as follows. Required for the sorting and concentration of proteins resulting in the entry of these proteins into the invaginating vesicles of the multivesicular body (MVB). Acts a component of the ESCRT-III complex, which appears to be critical for late steps in MVB sorting, such as membrane invagination and final cargo sorting and recruitment of late-acting components of the sorting machinery. The MVB pathway requires the sequential function of ESCRT-O, -I,-II and -III complex assemblies. Can directly stimulate VPS4 ATPase activity. The DID4/VPS2-VPS24 subcomplex is required for the VPS4-dependent dissociation of ESCRT-III. In Saccharomyces cerevisiae (strain ATCC 204508 / S288c) (Baker's yeast), this protein is DOA4-independent degradation protein 4 (DID4).